A 503-amino-acid chain; its full sequence is Probable cytosol aminopeptidase (503 aa).

Mn(2+)-binding residues include K268 and D273. The active site involves K280. 3 residues coordinate Mn(2+): D291, D350, and E352. Residue R354 is part of the active site.

It belongs to the peptidase M17 family. Mn(2+) serves as cofactor.

The protein resides in the cytoplasm. The catalysed reaction is Release of an N-terminal amino acid, Xaa-|-Yaa-, in which Xaa is preferably Leu, but may be other amino acids including Pro although not Arg or Lys, and Yaa may be Pro. Amino acid amides and methyl esters are also readily hydrolyzed, but rates on arylamides are exceedingly low.. The enzyme catalyses Release of an N-terminal amino acid, preferentially leucine, but not glutamic or aspartic acids.. Presumably involved in the processing and regular turnover of intracellular proteins. Catalyzes the removal of unsubstituted N-terminal amino acids from various peptides. This chain is Probable cytosol aminopeptidase, found in Methylobacterium radiotolerans (strain ATCC 27329 / DSM 1819 / JCM 2831 / NBRC 15690 / NCIMB 10815 / 0-1).